We begin with the raw amino-acid sequence, 301 residues long: MSEDIRRGPGRPPKKRVVPNFERKGILEKPVRPQSRLEFSYDNPLIFKNLFIYFKNLKSKNILVRCTPTEITFFSRDQSQASFVIATIDGKNVNHYYASDVFWLGINRELVEKMFNSIDRSFLKITIVHRYDKPETLFFIFTDFDIDKECTYQITVSEPELDMDLIEMEKSISEERLKNYPLRWEFTSKQLKKTFSDLSNYTELVTIEKLGGDTPLHLYFQKFNSISYHEMYKSSNKINLTSTIPKSQVFQINVKIAHIKSLASAMVTDKIRILCEENGNLIFQSEMDALLLNTITLNNMI.

Belongs to the asfivirus E301R family. Interacts with host IRF3.

Plays a role in the inhibition of host innate immune system by acting as a negatively regulator of type I interferon production. Mechanistically, interacts with and prevents host IRF3 nuclear localization to inhibit its transcriptional activity. This is an uncharacterized protein from African swine fever virus (isolate Pig/Kenya/KEN-50/1950) (ASFV).